The primary structure comprises 152 residues: Ubiquitin-activating enzyme E1 Y (152 aa).

The active-site Glycyl thioester intermediate is the cysteine 51.

It belongs to the ubiquitin-activating E1 family. As to quaternary structure, monomer.

The enzyme catalyses ATP + ubiquitin + [E1 ubiquitin-activating enzyme]-L-cysteine = AMP + diphosphate + S-ubiquitinyl-[E1 ubiquitin-activating enzyme]-L-cysteine.. The protein operates within protein modification; protein ubiquitination. Activates ubiquitin by first adenylating its C-terminal glycine residue with ATP, and thereafter linking this residue to the side chain of a cysteine residue in E1, yielding a ubiquitin-E1 thioester and free AMP. The Y chromosome form could be involved in the survival and proliferation of differentiating spermatogonia. This Osphranter rufus (Red kangaroo) protein is Ubiquitin-activating enzyme E1 Y (UBE1Y).